Here is a 473-residue protein sequence, read N- to C-terminus: MSLSRRRFIQATGATLAASALPLQAQAAETPVALPIPPLLESRRGQPLFLTLQRLHWTFAAGRRAATWGINGGYLGPTVRVYNGDDVNIIYNNRLTEPVAMTVSGLQVPGTLMGGAARMMSPGADWSPVLPIRQTAGTCWYHANTPNRMAPHIYNGLAGLWLVEDAVSKVLPLPNHYGVDDFPLIIQDKRLDNFGQPVYNPPASGGFLGDTLLVNGAQSPFVEVSRGWVRLRLLNASNSRCYQLQLSDGRAMHVVAGDQGFLPAPVPVIRLSLAPGERREILIDMSKGEEVAITAGEAAGLMDRVRGFFEPSSILVNTTVLTLKPTGLLPLVTDNLPMRLLSDQLIDGGISRTREFSLGGSTPDINGALWNMSRNDFQSLQGSFERWIVHTNTPQAFHIQGVAFLIKRVNGNTPLPEDQGWKDTVWVDNEVELLVWFPQVAPDHFPYLYYSQTLEMADRGAAGQFVVRPQSVG.

The tat-type signal signal peptide spans 1 to 27; sequence MSLSRRRFIQATGATLAASALPLQAQA.

The protein belongs to the FtsP family. Post-translationally, predicted to be exported by the Tat system. The position of the signal peptide cleavage has not been experimentally proven.

The protein resides in the periplasm. Its function is as follows. Cell division protein that is required for growth during stress conditions. May be involved in protecting or stabilizing the divisomal assembly under conditions of stress. The polypeptide is Cell division protein FtsP (ftsP) (Sodalis glossinidius (strain morsitans)).